Reading from the N-terminus, the 262-residue chain is Hydroxyethylthiazole kinase (262 aa).

Residue methionine 50 participates in substrate binding. Residues arginine 125 and threonine 171 each coordinate ATP. Substrate is bound at residue glycine 198.

Belongs to the Thz kinase family. The cofactor is Mg(2+).

The catalysed reaction is 5-(2-hydroxyethyl)-4-methylthiazole + ATP = 4-methyl-5-(2-phosphooxyethyl)-thiazole + ADP + H(+). Its pathway is cofactor biosynthesis; thiamine diphosphate biosynthesis; 4-methyl-5-(2-phosphoethyl)-thiazole from 5-(2-hydroxyethyl)-4-methylthiazole: step 1/1. Functionally, catalyzes the phosphorylation of the hydroxyl group of 4-methyl-5-beta-hydroxyethylthiazole (THZ). This is Hydroxyethylthiazole kinase from Shigella boydii serotype 18 (strain CDC 3083-94 / BS512).